We begin with the raw amino-acid sequence, 488 residues long: Glutamyl-tRNA(Gln) amidotransferase subunit B, mitochondrial (488 aa).

This sequence belongs to the GatB/GatE family. GatB subfamily. In terms of assembly, subunit of the heterotrimeric GatFAB amidotransferase (AdT) complex, composed of A, B and F subunits.

The protein resides in the mitochondrion. It catalyses the reaction L-glutamyl-tRNA(Gln) + L-glutamine + ATP + H2O = L-glutaminyl-tRNA(Gln) + L-glutamate + ADP + phosphate + H(+). Its function is as follows. Allows the formation of correctly charged Gln-tRNA(Gln) through the transamidation of misacylated Glu-tRNA(Gln) in the mitochondria. The reaction takes place in the presence of glutamine and ATP through an activated gamma-phospho-Glu-tRNA(Gln). The polypeptide is Glutamyl-tRNA(Gln) amidotransferase subunit B, mitochondrial (Candida albicans (strain WO-1) (Yeast)).